Consider the following 330-residue polypeptide: tRNA N6-adenosine threonylcarbamoyltransferase (330 aa).

Residues His110 and His114 each contribute to the Fe cation site. Substrate is bound by residues 133–137 (LVSGG), Asp166, Gly179, and Asn268. Asp296 lines the Fe cation pocket.

Belongs to the KAE1 / TsaD family. Requires Fe(2+) as cofactor.

Its subcellular location is the cytoplasm. It catalyses the reaction L-threonylcarbamoyladenylate + adenosine(37) in tRNA = N(6)-L-threonylcarbamoyladenosine(37) in tRNA + AMP + H(+). Its function is as follows. Required for the formation of a threonylcarbamoyl group on adenosine at position 37 (t(6)A37) in tRNAs that read codons beginning with adenine. Is involved in the transfer of the threonylcarbamoyl moiety of threonylcarbamoyl-AMP (TC-AMP) to the N6 group of A37, together with TsaE and TsaB. TsaD likely plays a direct catalytic role in this reaction. In Kosmotoga olearia (strain ATCC BAA-1733 / DSM 21960 / TBF 19.5.1), this protein is tRNA N6-adenosine threonylcarbamoyltransferase.